The following is a 318-amino-acid chain: Protein IMPACT-A (318 aa).

Residues 14-116 (DEVEALTSIY…EKIREFLLGK (103 aa)) form the RWD domain. A disordered region spans residues 296 to 318 (EESSKQTAKSKKVGKECKKKADH). The segment covering 308-318 (VGKECKKKADH) has biased composition (basic and acidic residues).

It belongs to the IMPACT family. As to quaternary structure, interacts with GCN1; prevents the interaction of GCN1 with EIF2AK4/GCN2 and inhibits EIF2AK4/GCN2 kinase activity. Interaction with RPL39; this interaction occurs in a GCN1-independent manner. Associates with ribosomes; this interaction occurs in a GCN1-independent manner. Associates with actin; this interaction occurs in a GCN1-independent manner.

It is found in the cytoplasm. Its function is as follows. Translational regulator that ensures constant high levels of translation upon a variety of stress conditions, such as amino acid starvation, UV-C irradiation, proteasome inhibitor treatment and glucose deprivation. Plays a role as a negative regulator of the EIF2AK4/GCN2 kinase activity; impairs GCN1-mediated EIF2AK4/GCN2 activation, and hence EIF2AK4/GCN2-mediated eIF-2-alpha phosphorylation and subsequent down-regulation of protein synthesis. Plays a role in differentiation of neuronal cells by stimulating neurite outgrowth. The sequence is that of Protein IMPACT-A (impact-A) from Xenopus tropicalis (Western clawed frog).